The following is a 143-amino-acid chain: Peptide methionine sulfoxide reductase MsrB (143 aa).

The MsrB domain occupies 16-139; the sequence is DAELRRRLTP…NSAALNFEAK (124 aa). Cys55, Cys58, Cys104, and Cys107 together coordinate Zn(2+). The active-site Nucleophile is the Cys128.

It belongs to the MsrB Met sulfoxide reductase family. Zn(2+) is required as a cofactor.

It catalyses the reaction L-methionyl-[protein] + [thioredoxin]-disulfide + H2O = L-methionyl-(R)-S-oxide-[protein] + [thioredoxin]-dithiol. The protein is Peptide methionine sulfoxide reductase MsrB of Burkholderia pseudomallei (strain 1710b).